The sequence spans 725 residues: Beta-adducin (725 aa).

Positions 1 to 22 (MSEDTVPEAASPPPSQGQHYFD) are disordered. Phosphoserine occurs at positions 11 and 25. Threonine 55 is subject to Phosphothreonine. A phosphoserine mark is found at serine 60 and serine 344. An interaction with calmodulin region spans residues 425–444 (KQQKEKTRWLNTPNTYLRVN). The interval 525-725 (AEKSRSPSTE…KSKKKEKVES (201 aa)) is disordered. A phosphoserine mark is found at serine 530 and serine 532. At threonine 533 the chain carries Phosphothreonine. Serine 535 carries the phosphoserine modification. Residue threonine 561 is modified to Phosphothreonine. A compositionally biased stretch (basic and acidic residues) spans 566 to 588 (EEYKKEVERKKLEQEQEGEKDAA). Phosphoserine occurs at positions 594, 598, 602, and 606. The span at 596–621 (VKSTPASPVQSPTRAGTKSPAVSPSK) shows a compositional bias: polar residues. Position 612 is a phosphothreonine (threonine 612). Phosphoserine occurs at positions 614, 618, and 620. Composition is skewed to basic and acidic residues over residues 622-631 (ASEDAKKTEV) and 639-654 (EPEKPEGVVVNGKEEE). Phosphothreonine is present on threonine 674. 9 positions are modified to phosphoserine: serine 678, serine 685, serine 688, serine 692, serine 696, serine 698, serine 700, serine 702, and serine 712. Residues 687–700 (TSGPLSPEGSPSKS) are compositionally biased toward low complexity. Residues 701–725 (PSKKKKKFRTPSFLKKSKKKEKVES) show a composition bias toward basic residues. The interaction with calmodulin stretch occupies residues 703-720 (KKKKKFRTPSFLKKSKKK).

The protein belongs to the aldolase class II family. Adducin subfamily. In terms of assembly, heterodimer of an alpha and a beta subunit. Found in a complex with ADD2, DMTN and SLC2A1. Interacts with SLC2A1. As to expression, found in liver, kidney, spleen, heart and brain.

The protein localises to the cytoplasm. The protein resides in the cytoskeleton. It localises to the cell membrane. Functionally, membrane-cytoskeleton-associated protein that promotes the assembly of the spectrin-actin network. Binds to the erythrocyte membrane receptor SLC2A1/GLUT1 and may therefore provide a link between the spectrin cytoskeleton to the plasma membrane. Binds to calmodulin. Calmodulin binds preferentially to the beta subunit. This Rattus norvegicus (Rat) protein is Beta-adducin (Add2).